The following is a 66-amino-acid chain: COP9 signalosome complex subunit 6a (66 aa).

This sequence belongs to the peptidase M67A family. CSN6 subfamily. Component of the CSN complex, probably composed of CSN1, CSN2, CSN3, CSN4, CSN5 (CSN5A or CSN5B), CSN6 (CSN6A or CSN6B), CSN7 and CSN8.

The protein resides in the cytoplasm. Its subcellular location is the nucleus. Component of the COP9 signalosome complex (CSN), a complex involved in various cellular and developmental processes such as photomorphogenesis and auxin and jasmonate responses. The CSN complex is an essential regulator of the ubiquitin (Ubl) conjugation pathway by mediating the deneddylation of the cullin subunits of SCF-type E3 ligase complexes, leading to decrease the Ubl ligase activity of SCF. It is involved in repression of photomorphogenesis in darkness by regulating the activity of COP1-containing Ubl ligase complexes. The chain is COP9 signalosome complex subunit 6a (CSN6A) from Brassica oleracea (Wild cabbage).